The chain runs to 97 residues: Large ribosomal subunit protein bL25 (97 aa).

The protein belongs to the bacterial ribosomal protein bL25 family. In terms of assembly, part of the 50S ribosomal subunit; part of the 5S rRNA/L5/L18/L25 subcomplex. Contacts the 5S rRNA. Binds to the 5S rRNA independently of L5 and L18.

Functionally, this is one of the proteins that binds to the 5S RNA in the ribosome where it forms part of the central protuberance. The sequence is that of Large ribosomal subunit protein bL25 from Blochmanniella pennsylvanica (strain BPEN).